Here is a 161-residue protein sequence, read N- to C-terminus: Vitamin K-dependent protein C (161 aa).

Positions 1-161 (EKWELDLDIE…GCGLLHNYGV (161 aa)) constitute a Peptidase S1 domain. N17 is a glycosylation site (N-linked (GlcNAc...) asparagine). The Charge relay system role is filled by D26. N82 carries an N-linked (GlcNAc...) asparagine glycan. 2 disulfide bridges follow: C100-C114 and C125-C153. The active-site Charge relay system is S129.

This sequence belongs to the peptidase S1 family. In terms of tissue distribution, plasma; synthesized in the liver.

It is found in the secreted. The protein resides in the golgi apparatus. It localises to the endoplasmic reticulum. It carries out the reaction Degradation of blood coagulation factors Va and VIIIa.. Functionally, protein C is a vitamin K-dependent serine protease that regulates blood coagulation by inactivating factors Va and VIIIa in the presence of calcium ions and phospholipids. Exerts a protective effect on the endothelial cell barrier function. This is Vitamin K-dependent protein C (PROC) from Macaca mulatta (Rhesus macaque).